Here is a 113-residue protein sequence, read N- to C-terminus: Fruiting body-specific class I hydrophobin fbh1 (113 aa).

A signal peptide spans 1-23 (MFSIRIATVVLAASAALRPPARI). Cystine bridges form between cysteine 33/cysteine 92, cysteine 40/cysteine 86, cysteine 41/cysteine 73, and cysteine 93/cysteine 106.

It belongs to the fungal hydrophobin family. In terms of assembly, self-assembles to form functional amyloid fibrils called rodlets. Self-assembly into fibrillar rodlets occurs spontaneously at hydrophobic:hydrophilic interfaces and the rodlets further associate laterally to form amphipathic monolayers.

It is found in the secreted. Its subcellular location is the cell wall. Its function is as follows. Aerial growth, conidiation, and dispersal of filamentous fungi in the environment rely upon a capability of their secreting small amphipathic proteins called hydrophobins (HPBs) with low sequence identity. Class I can self-assemble into an outermost layer of rodlet bundles on aerial cell surfaces, conferring cellular hydrophobicity that supports fungal growth, development and dispersal; whereas Class II form highly ordered films at water-air interfaces through intermolecular interactions but contribute nothing to the rodlet structure. Fbh1 is a fruiting body-specific class I hydrophobin that is involved in the growth rate and primordia formation. The protein is Fruiting body-specific class I hydrophobin fbh1 of Pleurotus ostreatus (Oyster mushroom).